Reading from the N-terminus, the 61-residue chain is Protein MATERNALLY EXPRESSED GENE 6 (61 aa).

Cys38 and Cys60 are joined by a disulfide.

It belongs to the MEG family. As to expression, ubiquitous.

The polypeptide is Protein MATERNALLY EXPRESSED GENE 6 (MEG6) (Zea mays (Maize)).